Consider the following 360-residue polypeptide: uncharacterized protein (360 aa).

7 consecutive transmembrane segments (helical) span residues 26 to 48 (SVCY…SGAT), 58 to 80 (LHPL…ASVL), 89 to 111 (VMGL…NIAH), 126 to 148 (LSTG…SILA), 169 to 191 (RLAY…PTAL), 195 to 214 (IPSV…YALL), and 227 to 249 (CALC…SHMV).

The protein resides in the cell membrane. This is an uncharacterized protein from Treponema pallidum (strain Nichols).